A 189-amino-acid chain; its full sequence is Movement protein (189 aa).

This sequence belongs to the tombusvirus/aureusvirus movement protein p22 family.

The protein localises to the host membrane. Transports viral genome to neighboring plant cells directly through plasmosdesmata, without any budding. The movement protein allows efficient cell to cell propagation, by bypassing the host cell wall barrier. The polypeptide is Movement protein (Cymbidium ringspot virus (CymRSV)).